The primary structure comprises 281 residues: Protoheme IX farnesyltransferase (281 aa).

Helical transmembrane passes span 16–36 (TFLL…GADF), 38–58 (FVIA…INMW), 75–95 (VPAG…IFAI), 101–121 (FLVS…DIVV), 129–149 (KSPY…LGGW), 150–170 (VAVQ…LLWI), 202–224 (ASWA…YVLL), 228–250 (IFYL…KFAL), and 261–281 (YKLA…GVFL).

This sequence belongs to the UbiA prenyltransferase family. Protoheme IX farnesyltransferase subfamily.

Its subcellular location is the cell membrane. It carries out the reaction heme b + (2E,6E)-farnesyl diphosphate + H2O = Fe(II)-heme o + diphosphate. The protein operates within porphyrin-containing compound metabolism; heme O biosynthesis; heme O from protoheme: step 1/1. Functionally, converts heme B (protoheme IX) to heme O by substitution of the vinyl group on carbon 2 of heme B porphyrin ring with a hydroxyethyl farnesyl side group. The chain is Protoheme IX farnesyltransferase from Archaeoglobus fulgidus (strain ATCC 49558 / DSM 4304 / JCM 9628 / NBRC 100126 / VC-16).